Reading from the N-terminus, the 246-residue chain is UDP-N-acetyl-D-mannosaminuronic acid transferase (246 aa).

The protein belongs to the glycosyltransferase 26 family.

It catalyses the reaction UDP-N-acetyl-alpha-D-mannosaminouronate + N-acetyl-alpha-D-glucosaminyl-di-trans,octa-cis-undecaprenyl diphosphate = beta-D-ManNAcA-(1-&gt;4)-alpha-D-GlcNAc-di-trans,octa-cis-undecaprenyl diphosphate + UDP + H(+). Its pathway is bacterial outer membrane biogenesis; enterobacterial common antigen biosynthesis. Its function is as follows. Catalyzes the synthesis of Und-PP-GlcNAc-ManNAcA (Lipid II), the second lipid-linked intermediate involved in enterobacterial common antigen (ECA) synthesis. The chain is UDP-N-acetyl-D-mannosaminuronic acid transferase from Salmonella paratyphi A (strain ATCC 9150 / SARB42).